The chain runs to 548 residues: Chaperonin GroEL (548 aa).

ATP-binding positions include threonine 30–proline 33, lysine 51, aspartate 87–threonine 91, glycine 415, and aspartate 495.

It belongs to the chaperonin (HSP60) family. Forms a cylinder of 14 subunits composed of two heptameric rings stacked back-to-back. Interacts with the co-chaperonin GroES.

The protein localises to the cytoplasm. It catalyses the reaction ATP + H2O + a folded polypeptide = ADP + phosphate + an unfolded polypeptide.. In terms of biological role, together with its co-chaperonin GroES, plays an essential role in assisting protein folding. The GroEL-GroES system forms a nano-cage that allows encapsulation of the non-native substrate proteins and provides a physical environment optimized to promote and accelerate protein folding. The protein is Chaperonin GroEL of Colwellia psychrerythraea (strain 34H / ATCC BAA-681) (Vibrio psychroerythus).